We begin with the raw amino-acid sequence, 112 residues long: DNA-binding protein Bv3F (112 aa).

The tract at residues 65–92 (KRNSKRMSTVPKYRDPATGKTWSGRGRQ) is disordered. 2 consecutive DNA-binding regions follow at residues 89 to 94 (RGRQPA) and 89 to 95 (RGRQPAW).

This sequence belongs to the histone-like protein H-NS family. As to quaternary structure, homodimer that oligomerizes on DNA into higher-order complexes that form bridges between disparate regions of DNA compacting it.

Its subcellular location is the cytoplasm. It localises to the nucleoid. A DNA-binding protein implicated in transcriptional repression and chromosome organization and compaction. Binds in the minor groove of AT-rich DNA. Binds nucleation sites in AT-rich DNA and bridges them, forming higher-order nucleoprotein complexes and condensing the chromosome. As many horizontally transferred genes are AT-rich, it plays a central role in silencing foreign genes. In Burkholderia vietnamiensis (strain G4 / LMG 22486) (Burkholderia cepacia (strain R1808)), this protein is DNA-binding protein Bv3F.